The primary structure comprises 538 residues: Putative outer membrane porin BglH (538 aa).

A signal peptide spans 1–25 (MFRQNLITSAILLMAPLAFSAQSLA). A disordered region spans residues 52–82 (KDEEKKKYTPATVNRSVSTNDQGYAANPFPT). Polar residues predominate over residues 62–73 (ATVNRSVSTNDQ).

The protein belongs to the porin LamB (TC 1.B.3) family.

It is found in the cell outer membrane. May be a sugar porin with a broad carbohydrate specificity. The sequence is that of Putative outer membrane porin BglH (bglH) from Shigella flexneri.